We begin with the raw amino-acid sequence, 308 residues long: Ornithine carbamoyltransferase (308 aa).

Carbamoyl phosphate contacts are provided by residues 56–59, Gln83, Arg107, and 134–137; these read STRT and HPCQ. L-ornithine is bound by residues Asn165, Asp225, and 229 to 230; that span reads SM. Residues 266–267 and Arg294 contribute to the carbamoyl phosphate site; that span reads CL.

Belongs to the aspartate/ornithine carbamoyltransferase superfamily. OTCase family.

It localises to the cytoplasm. The catalysed reaction is carbamoyl phosphate + L-ornithine = L-citrulline + phosphate + H(+). It participates in amino-acid biosynthesis; L-arginine biosynthesis; L-arginine from L-ornithine and carbamoyl phosphate: step 1/3. Functionally, reversibly catalyzes the transfer of the carbamoyl group from carbamoyl phosphate (CP) to the N(epsilon) atom of ornithine (ORN) to produce L-citrulline. The sequence is that of Ornithine carbamoyltransferase from Roseobacter denitrificans (strain ATCC 33942 / OCh 114) (Erythrobacter sp. (strain OCh 114)).